The sequence spans 136 residues: Large ribosomal subunit protein uL22 (136 aa).

It belongs to the universal ribosomal protein uL22 family. As to quaternary structure, part of the 50S ribosomal subunit.

Its function is as follows. This protein binds specifically to 23S rRNA; its binding is stimulated by other ribosomal proteins, e.g. L4, L17, and L20. It is important during the early stages of 50S assembly. It makes multiple contacts with different domains of the 23S rRNA in the assembled 50S subunit and ribosome. In terms of biological role, the globular domain of the protein is located near the polypeptide exit tunnel on the outside of the subunit, while an extended beta-hairpin is found that lines the wall of the exit tunnel in the center of the 70S ribosome. This Leifsonia xyli subsp. xyli (strain CTCB07) protein is Large ribosomal subunit protein uL22.